The primary structure comprises 273 residues: HMP-PP phosphatase (273 aa).

Residue aspartate 8 is the Nucleophile of the active site. Mg(2+) contacts are provided by aspartate 8, aspartate 10, and aspartate 212.

This sequence belongs to the HAD-like hydrolase superfamily. Cof family. The cofactor is Mg(2+).

It carries out the reaction 4-amino-2-methyl-5-(diphosphooxymethyl)pyrimidine + H2O = 4-amino-2-methyl-5-(phosphooxymethyl)pyrimidine + phosphate + H(+). In terms of biological role, catalyzes the hydrolysis of 4-amino-2-methyl-5-hydroxymethylpyrimidine pyrophosphate (HMP-PP) to 4-amino-2-methyl-5-hydroxymethylpyrimidine phosphate (HMP-P). The polypeptide is HMP-PP phosphatase (Yersinia pseudotuberculosis serotype O:1b (strain IP 31758)).